Reading from the N-terminus, the 145-residue chain is Cytochrome b (145 aa).

A helical membrane pass occupies residues 38–58 (FFALHFLLPFVLAALVIMHLI). Heme b contacts are provided by histidine 42 and histidine 56. Histidine 61 contributes to the a ubiquinone binding site. A helical membrane pass occupies residues 85-105 (FVFKDLVTVFIFFIVLSVFVF).

It belongs to the cytochrome b family. Fungal cytochrome b-c1 complex contains 10 subunits; 3 respiratory subunits, 2 core proteins and 5 low-molecular weight proteins. Cytochrome b-c1 complex is a homodimer. It depends on heme b as a cofactor.

Its subcellular location is the mitochondrion inner membrane. Component of the ubiquinol-cytochrome c reductase complex (complex III or cytochrome b-c1 complex) that is part of the mitochondrial respiratory chain. The b-c1 complex mediates electron transfer from ubiquinol to cytochrome c. Contributes to the generation of a proton gradient across the mitochondrial membrane that is then used for ATP synthesis. This chain is Cytochrome b (cob), found in Aspergillus fumigatus (Neosartorya fumigata).